The chain runs to 128 residues: Early 4 ORF1 protein (128 aa).

Over 1–26 (MAAAVEALYVVLEREGAILPRQEGFS) the chain is Cytoplasmic. The chain crosses the membrane as a helical span at residues 27 to 47 (GVYVFFSPINFVIPPMGAVML). Residues 48–99 (SLRLRVCIPPGYFGRFLALTDVNQPDVFTESYIMTPDMTEELSVVLFNHGDQ) lie on the Extracellular side of the membrane. Residues 100-120 (FFYGHAGMAVVRLMLIRVVFP) form a helical membrane-spanning segment. Residues 121-128 (VVRQASNV) lie on the Cytoplasmic side of the membrane. The short motif at 125 to 128 (ASNV) is the PBZ domain binding motif element.

This sequence belongs to the adenoviridae E4-ORF1 family. May interact with host PDZ proteins through the PDZ domain binding motif (PBM), namely host DLG1, PATJ and TJP2.

The protein resides in the host membrane. Its function is as follows. May modulate tight-junctions functions of infected cells through interactions with PDZ proteins. E4 ORF1 has ben show for Adenovirus 9 to interact with protein involved in tight junction regulation. May play a role in mTOR activation by activating PI3-kinase, thus overriding cellular checkpoint for translation. This chain is Early 4 ORF1 protein, found in Human adenovirus C serotype 2 (HAdV-2).